A 352-amino-acid polypeptide reads, in one-letter code: Heavy metal-associated isoprenylated plant protein 36 (352 aa).

The region spanning 29 to 92 is the HMA domain; the sequence is YTTWVLRVSI…KIMKAGRHAE (64 aa). A metal cation contacts are provided by cysteine 40 and cysteine 43. Disordered stretches follow at residues 96-150, 162-211, and 229-252; these read TSME…GNFD, QLQP…GPPE, and PHLH…RHHP. The segment covering 97 to 107 has biased composition (polar residues); sequence SMENNINNDCN. The segment covering 118 to 128 has biased composition (acidic residues); the sequence is ETSGDEDDDEN. Over residues 133 to 148 the composition is skewed to gly residues; it reads NGGGDVGGGGGGGGGN. The segment covering 172–183 has biased composition (basic residues); sequence KKKKKKKKKKKS. The span at 192 to 203 shows a compositional bias: gly residues; the sequence is EGGGGGGGGGGP. Position 349 is a cysteine methyl ester (cysteine 349). A lipid anchor (S-farnesyl cysteine) is attached at cysteine 349. Positions 350 to 352 are cleaved as a propeptide — removed in mature form; it reads CVM.

Belongs to the HIPP family.

Heavy-metal-binding protein. The protein is Heavy metal-associated isoprenylated plant protein 36 of Arabidopsis thaliana (Mouse-ear cress).